Consider the following 229-residue polypeptide: Flagellar L-ring protein (229 aa).

A signal peptide spans Met1–Gly25. A lipid anchor (N-palmitoyl cysteine) is attached at Cys26. The S-diacylglycerol cysteine moiety is linked to residue Cys26.

It belongs to the FlgH family. The basal body constitutes a major portion of the flagellar organelle and consists of four rings (L,P,S, and M) mounted on a central rod.

It localises to the cell outer membrane. It is found in the bacterial flagellum basal body. Assembles around the rod to form the L-ring and probably protects the motor/basal body from shearing forces during rotation. This Burkholderia multivorans (strain ATCC 17616 / 249) protein is Flagellar L-ring protein.